The chain runs to 396 residues: Cytochrome b (396 aa).

Helical transmembrane passes span 37 to 57 (FGSLLSLCLILQIITGLILAM), 81 to 102 (WLMRNLHANGASMFFICIYAHI), 117 to 137 (WNVGVILFALTAATAFVGYVL), and 182 to 202 (FFTFHFILPFILAAMTMIHIM). The heme b site is built by His-87 and His-101. Residues His-186 and His-200 each coordinate heme b. His-205 contributes to the a ubiquinone binding site. Helical transmembrane passes span 230–250 (FKDILGFVILLGILFMISLLA), 292–312 (LGGVVALAAAIMILLIIPFTH), 324–344 (LAQITFWILIADLALLTWLGG), and 351–371 (FILMTQIASTVYFMIFILVFP).

Belongs to the cytochrome b family. In terms of assembly, the cytochrome bc1 complex contains 3 respiratory subunits (MT-CYB, CYC1 and UQCRFS1), 2 core proteins (UQCRC1 and UQCRC2) and probably 6 low-molecular weight proteins. It depends on heme b as a cofactor.

The protein localises to the mitochondrion inner membrane. Functionally, component of the ubiquinol-cytochrome c reductase complex (complex III or cytochrome b-c1 complex) that is part of the mitochondrial respiratory chain. The b-c1 complex mediates electron transfer from ubiquinol to cytochrome c. Contributes to the generation of a proton gradient across the mitochondrial membrane that is then used for ATP synthesis. This is Cytochrome b (mt-cyb) from Petromyzon marinus (Sea lamprey).